The following is a 118-amino-acid chain: Large ribosomal subunit protein uL22 (118 aa).

It belongs to the universal ribosomal protein uL22 family. As to quaternary structure, part of the 50S ribosomal subunit.

This protein binds specifically to 23S rRNA; its binding is stimulated by other ribosomal proteins, e.g. L4, L17, and L20. It is important during the early stages of 50S assembly. It makes multiple contacts with different domains of the 23S rRNA in the assembled 50S subunit and ribosome. Its function is as follows. The globular domain of the protein is located near the polypeptide exit tunnel on the outside of the subunit, while an extended beta-hairpin is found that lines the wall of the exit tunnel in the center of the 70S ribosome. This is Large ribosomal subunit protein uL22 from Prosthecochloris aestuarii (strain DSM 271 / SK 413).